A 29-amino-acid chain; its full sequence is Dermaseptin-J6 (29 aa).

Val-29 bears the Valine amide mark.

As to expression, expressed by the skin glands.

It is found in the secreted. In terms of biological role, has antimicrobial activity. The sequence is that of Dermaseptin-J6 from Phasmahyla jandaia (Jandaia leaf frog).